Consider the following 520-residue polypeptide: Laccase (520 aa).

Residues 1–21 form the signal peptide; that stretch reads MSRFQSLLAFVVASLAAVAHA. Plastocyanin-like domains follow at residues 23 to 148 and 160 to 302; these read IGPT…FVVY and VDND…ILRY. N72 and N75 each carry an N-linked (GlcNAc...) asparagine glycan. Cu cation contacts are provided by H85, H87, H130, and H132. 2 disulfides stabilise this stretch: C106/C509 and C138/C226. N210, N229, and N354 each carry an N-linked (GlcNAc...) asparagine glycan. One can recognise a Plastocyanin-like 3 domain in the interval 369–491; sequence TVPVLLQIIS…AGFAVVFAED (123 aa). Positions 416, 419, 421, 473, 474, 475, and 479 each coordinate Cu cation.

Belongs to the multicopper oxidase family. It depends on Cu cation as a cofactor.

The protein localises to the secreted. It carries out the reaction 4 hydroquinone + O2 = 4 benzosemiquinone + 2 H2O. Functionally, lignin degradation and detoxification of lignin-derived products. Has activity towards guaiacol. This chain is Laccase, found in Trametes hirsuta (White-rot fungus).